The chain runs to 154 residues: 6,7-dimethyl-8-ribityllumazine synthase (154 aa).

5-amino-6-(D-ribitylamino)uracil contacts are provided by residues Phe-22, 56–58, and 81–83; these read AFE and VLI. 86-87 lines the (2S)-2-hydroxy-3-oxobutyl phosphate pocket; it reads ET. The active-site Proton donor is His-89. Leu-114 provides a ligand contact to 5-amino-6-(D-ribitylamino)uracil. Residue Arg-128 participates in (2S)-2-hydroxy-3-oxobutyl phosphate binding.

It belongs to the DMRL synthase family.

It catalyses the reaction (2S)-2-hydroxy-3-oxobutyl phosphate + 5-amino-6-(D-ribitylamino)uracil = 6,7-dimethyl-8-(1-D-ribityl)lumazine + phosphate + 2 H2O + H(+). The protein operates within cofactor biosynthesis; riboflavin biosynthesis; riboflavin from 2-hydroxy-3-oxobutyl phosphate and 5-amino-6-(D-ribitylamino)uracil: step 1/2. Its function is as follows. Catalyzes the formation of 6,7-dimethyl-8-ribityllumazine by condensation of 5-amino-6-(D-ribitylamino)uracil with 3,4-dihydroxy-2-butanone 4-phosphate. This is the penultimate step in the biosynthesis of riboflavin. The chain is 6,7-dimethyl-8-ribityllumazine synthase from Chlamydia pneumoniae (Chlamydophila pneumoniae).